Reading from the N-terminus, the 520-residue chain is UBX domain-containing protein 11 (520 aa).

The disordered stretch occupies residues 1–26 (MSSPLASLSKTRKVPLPSEPMNPGRR). A coiled-coil region spans residues 76–149 (MAFMTRKLWD…VREMERFLSD (74 aa)). Residues 230–294 (LEPIPLKLYR…VSDLRNQVYL (65 aa)) enclose the SEP domain. Positions 392-469 (PAPPLSMLRI…GLVPKAALLL (78 aa)) constitute a UBX domain. The interval 476-520 (KSSLKFSPGPCPGPGPGPSPGPGPGPSPGPGPGPSPCPGPSPSPQ) is disordered. The span at 484–520 (GPCPGPGPGPSPGPGPGPSPGPGPGPSPCPGPSPSPQ) shows a compositional bias: pro residues. A run of 3 repeats spans residues 487-494 (PGPGPGPS), 495-502 (PGPGPGPS), and 503-510 (PGPGPGPS). Positions 487 to 510 (PGPGPGPSPGPGPGPSPGPGPGPS) are 3 X 8 AA tandem repeats of P-G-P-G-P-G-P-S.

In terms of assembly, interacts with GNA12, GNA13, RND1, RND2 and RND3.

The protein localises to the cytoplasm. Its subcellular location is the cytoskeleton. May be involved in the reorganization of actin cytoskeleton mediated by RND1, RND2 and RND3. Promotes RHOA activation mediated by GNA12 and GNA13. This Homo sapiens (Human) protein is UBX domain-containing protein 11 (UBXN11).